Reading from the N-terminus, the 571-residue chain is Proline--tRNA ligase (571 aa).

It belongs to the class-II aminoacyl-tRNA synthetase family. ProS type 1 subfamily. Homodimer.

Its subcellular location is the cytoplasm. The enzyme catalyses tRNA(Pro) + L-proline + ATP = L-prolyl-tRNA(Pro) + AMP + diphosphate. Its function is as follows. Catalyzes the attachment of proline to tRNA(Pro) in a two-step reaction: proline is first activated by ATP to form Pro-AMP and then transferred to the acceptor end of tRNA(Pro). As ProRS can inadvertently accommodate and process non-cognate amino acids such as alanine and cysteine, to avoid such errors it has two additional distinct editing activities against alanine. One activity is designated as 'pretransfer' editing and involves the tRNA(Pro)-independent hydrolysis of activated Ala-AMP. The other activity is designated 'posttransfer' editing and involves deacylation of mischarged Ala-tRNA(Pro). The misacylated Cys-tRNA(Pro) is not edited by ProRS. This chain is Proline--tRNA ligase, found in Pseudomonas putida (strain ATCC 47054 / DSM 6125 / CFBP 8728 / NCIMB 11950 / KT2440).